Reading from the N-terminus, the 255-residue chain is Triosephosphate isomerase (255 aa).

Substrate is bound at residue 9-11 (NWK). The active-site Electrophile is histidine 95. Glutamate 167 (proton acceptor) is an active-site residue. Substrate-binding positions include glycine 173, serine 212, and 233–234 (GG).

Belongs to the triosephosphate isomerase family. As to quaternary structure, homodimer.

Its subcellular location is the cytoplasm. It carries out the reaction D-glyceraldehyde 3-phosphate = dihydroxyacetone phosphate. The protein operates within carbohydrate biosynthesis; gluconeogenesis. It participates in carbohydrate degradation; glycolysis; D-glyceraldehyde 3-phosphate from glycerone phosphate: step 1/1. Its function is as follows. Involved in the gluconeogenesis. Catalyzes stereospecifically the conversion of dihydroxyacetone phosphate (DHAP) to D-glyceraldehyde-3-phosphate (G3P). The polypeptide is Triosephosphate isomerase (Pectobacterium atrosepticum (strain SCRI 1043 / ATCC BAA-672) (Erwinia carotovora subsp. atroseptica)).